Here is a 169-residue protein sequence, read N- to C-terminus: Putative tRNA (cytidine(34)-2'-O)-methyltransferase (169 aa).

The S-adenosyl-L-methionine site is built by Ile-79, Gly-104, Ile-125, and Ser-133.

It belongs to the class IV-like SAM-binding methyltransferase superfamily. RNA methyltransferase TrmH family. TrmL subfamily.

It localises to the cytoplasm. It carries out the reaction cytidine(34) in tRNA + S-adenosyl-L-methionine = 2'-O-methylcytidine(34) in tRNA + S-adenosyl-L-homocysteine + H(+). The enzyme catalyses 5-carboxymethylaminomethyluridine(34) in tRNA(Leu) + S-adenosyl-L-methionine = 5-carboxymethylaminomethyl-2'-O-methyluridine(34) in tRNA(Leu) + S-adenosyl-L-homocysteine + H(+). Functionally, could methylate the ribose at the nucleotide 34 wobble position in tRNA. The sequence is that of Putative tRNA (cytidine(34)-2'-O)-methyltransferase from Listeria innocua serovar 6a (strain ATCC BAA-680 / CLIP 11262).